The sequence spans 168 residues: Ribosome maturation factor RimP (168 aa).

This sequence belongs to the RimP family.

Its subcellular location is the cytoplasm. Functionally, required for maturation of 30S ribosomal subunits. This is Ribosome maturation factor RimP from Syntrophobacter fumaroxidans (strain DSM 10017 / MPOB).